The following is a 275-amino-acid chain: Light-independent protochlorophyllide reductase iron-sulfur ATP-binding protein (275 aa).

Residues 12–17 and lysine 41 contribute to the ATP site; that span reads GIGKST. Serine 16 serves as a coordination point for Mg(2+). Residues cysteine 97 and cysteine 131 each coordinate [4Fe-4S] cluster. 182 to 183 contributes to the ATP binding site; sequence NR.

Belongs to the NifH/BchL/ChlL family. As to quaternary structure, homodimer. Protochlorophyllide reductase is composed of three subunits; BchL, BchN and BchB. The cofactor is [4Fe-4S] cluster.

It carries out the reaction chlorophyllide a + oxidized 2[4Fe-4S]-[ferredoxin] + 2 ADP + 2 phosphate = protochlorophyllide a + reduced 2[4Fe-4S]-[ferredoxin] + 2 ATP + 2 H2O. Its pathway is porphyrin-containing compound metabolism; bacteriochlorophyll biosynthesis (light-independent). Component of the dark-operative protochlorophyllide reductase (DPOR) that uses Mg-ATP and reduced ferredoxin to reduce ring D of protochlorophyllide (Pchlide) to form chlorophyllide a (Chlide). This reaction is light-independent. The L component serves as a unique electron donor to the NB-component of the complex, and binds Mg-ATP. This is Light-independent protochlorophyllide reductase iron-sulfur ATP-binding protein from Chlorobium phaeobacteroides (strain BS1).